The sequence spans 210 residues: MVCGGFACSKNALCALNVVYMLVGLLLIGVAAWAKGLGLVSSIHIIGGVIAVGVFLLLIAVAGLVGAVNHHQVLLFFYMIILGLVFIFQFGISCSCLAINLSKQTDVINASWWVMSNKTRDELERSFDCCGLFNLTTLDQQDYAFCTAVCKSRSPTCQMCGEKFLKHSDEALKILGGVGLFFSFTEILGVWLAMRFRNQKDPRANPSAFL.

The Cytoplasmic portion of the chain corresponds to 1–12 (MVCGGFACSKNA). Residues 13 to 33 (LCALNVVYMLVGLLLIGVAAW) traverse the membrane as a helical segment. Residues 34–44 (AKGLGLVSSIH) are Extracellular-facing. A helical transmembrane segment spans residues 45-65 (IIGGVIAVGVFLLLIAVAGLV). The Cytoplasmic segment spans residues 66-72 (GAVNHHQ). Residues 73 to 93 (VLLFFYMIILGLVFIFQFGIS) traverse the membrane as a helical segment. Over 94 to 173 (CSCLAINLSK…FLKHSDEALK (80 aa)) the chain is Extracellular. N-linked (GlcNAc...) asparagine glycans are attached at residues N100, N109, N117, and N134. A helical transmembrane segment spans residues 174–194 (ILGGVGLFFSFTEILGVWLAM). At 195–210 (RFRNQKDPRANPSAFL) the chain is on the cytoplasmic side.

The protein belongs to the tetraspanin (TM4SF) family.

It localises to the membrane. The chain is Tetraspanin-31 (TSPAN31) from Bos taurus (Bovine).